We begin with the raw amino-acid sequence, 154 residues long: Egg-lysin (154 aa).

Residues methionine 1–serine 18 form the signal peptide.

Monomer. Homodimer. Molecules associate into dimers and then rapidly dissociate again. Interacts (as a monomer) with the egg vitelline layer protein VERL (via VERL repeats); each VERL chain can bind multiple copies of lysin. Sperm (at protein level).

The protein resides in the cytoplasmic vesicle. It localises to the secretory vesicle. It is found in the acrosome lumen. Its function is as follows. Creates a 3 um hole in the egg vitelline layer through which the sperm passes. Does not have enzyme activity. Species-specific interaction between the sperm protein lysin and the egg protein VERL exposes a basic surface on lysin that may dissociate the egg vitelline layer via electrostatic repulsion. Plays a role in ensuring species-specific fertilization. This is Egg-lysin from Haliotis rufescens (California red abalone).